Here is an 87-residue protein sequence, read N- to C-terminus: RNA-binding protein Hfq (87 aa).

One can recognise a Sm domain in the interval 9 to 68; sequence DPFLNALRRERIPVSIYLVNGIKLQGQIESFDQFVILLKNTVSQMVYKHAISTVVPARAV.

It belongs to the Hfq family. In terms of assembly, homohexamer.

RNA chaperone that binds small regulatory RNA (sRNAs) and mRNAs to facilitate mRNA translational regulation in response to envelope stress, environmental stress and changes in metabolite concentrations. Also binds with high specificity to tRNAs. This chain is RNA-binding protein Hfq, found in Aeromonas salmonicida (strain A449).